The following is a 347-amino-acid chain: MDSFVSTYVWPAAIMIGQSLLLLVCLLVFIAYILLADRKIWAAVQLRRGPNVVGPWGLFQSFADLLKFVFKEPIIPAGANKAVFLLAPLVAVTLALATWAVIPLNQGWVIANINVGILYVFAISSLEVYGIIMGGWASNSKYPFLGALRSAAQMVSYEVSIGFVIVTVLLCAGSLNLTDIVNSQNHGLGTMMGMPASLLDWHWLSLFPMFVIFFISALAETNRPPFDLPEAESELVAGFMVEYGSTPYMMFMLGEYAAIVLMCALTTILFLGGWLPPLDIAVLNWVPGIIWFILKATLVFFMFGITKAIVPRYRYDQLMRLGWKVFLPLSLAMVVIVAFVLKLGGWA.

8 consecutive transmembrane segments (helical) span residues 14-34 (IMIGQSLLLLVCLLVFIAYIL), 82-102 (AVFLLAPLVAVTLALATWAVI), 115-135 (VGILYVFAISSLEVYGIIMGG), 161-181 (IGFVIVTVLLCAGSLNLTDIV), 198-218 (LLDWHWLSLFPMFVIFFISAL), 258-278 (AIVLMCALTTILFLGGWLPPL), 285-305 (WVPGIIWFILKATLVFFMFGI), and 321-341 (LGWKVFLPLSLAMVVIVAFVL).

This sequence belongs to the complex I subunit 1 family. NDH-1 is composed of 14 different subunits. Subunits NuoA, H, J, K, L, M, N constitute the membrane sector of the complex.

Its subcellular location is the cell inner membrane. It carries out the reaction a quinone + NADH + 5 H(+)(in) = a quinol + NAD(+) + 4 H(+)(out). NDH-1 shuttles electrons from NADH, via FMN and iron-sulfur (Fe-S) centers, to quinones in the respiratory chain. The immediate electron acceptor for the enzyme in this species is believed to be ubiquinone. Couples the redox reaction to proton translocation (for every two electrons transferred, four hydrogen ions are translocated across the cytoplasmic membrane), and thus conserves the redox energy in a proton gradient. This subunit may bind ubiquinone. The protein is NADH-quinone oxidoreductase subunit H of Allorhizobium ampelinum (strain ATCC BAA-846 / DSM 112012 / S4) (Agrobacterium vitis (strain S4)).